The sequence spans 599 residues: Putative sensor histidine kinase NtrY-like (599 aa).

4 consecutive transmembrane segments (helical) span residues 17 to 37 (VLIF…FYVI), 44 to 64 (FSTI…LGVL), 85 to 105 (IVIA…VFSV), and 285 to 305 (IMFI…GVIF). One can recognise an HAMP domain in the interval 307–361 (AKIVKPIKKLVTATDKVKDGDLTVQVPENEVDKDEIGTLYAAFNRMIKQLSRQQR). The Histidine kinase domain occupies 378-589 (KVAHEIKNPL…IIDIKFDLKK (212 aa)). H381 carries the post-translational modification Phosphohistidine; by autocatalysis.

It localises to the cell membrane. It carries out the reaction ATP + protein L-histidine = ADP + protein N-phospho-L-histidine.. Functionally, member of the two-component regulatory system RF_0427/RF_0895. This chain is Putative sensor histidine kinase NtrY-like, found in Rickettsia felis (strain ATCC VR-1525 / URRWXCal2) (Rickettsia azadi).